A 736-amino-acid polypeptide reads, in one-letter code: Catalase-peroxidase (736 aa).

The segment at 1 to 25 (MSENGKCPVTGKTSKPVAGGGTSNQ) is disordered. The segment at residues 96–224 (WHSAGTYRMG…LAAVQMGLIY (129 aa)) is a cross-link (tryptophyl-tyrosyl-methioninium (Trp-Tyr) (with M-250)). The active-site Proton acceptor is His97. The tryptophyl-tyrosyl-methioninium (Tyr-Met) (with W-96) cross-link spans 224–250 (YVNPEGPDGNPDPIASGKDVRETFARM). A heme b-binding site is contributed by His265. Residues 294-313 (GWKSSHGRGKGGDTISSGIE) are disordered.

This sequence belongs to the peroxidase family. Peroxidase/catalase subfamily. As to quaternary structure, homodimer or homotetramer. The cofactor is heme b. Post-translationally, formation of the three residue Trp-Tyr-Met cross-link is important for the catalase, but not the peroxidase activity of the enzyme.

The catalysed reaction is H2O2 + AH2 = A + 2 H2O. It carries out the reaction 2 H2O2 = O2 + 2 H2O. Bifunctional enzyme with both catalase and broad-spectrum peroxidase activity. This Desulfatibacillum aliphaticivorans protein is Catalase-peroxidase.